The following is a 51-amino-acid chain: Insulin (51 aa).

3 disulfide bridges follow: cysteine 7–cysteine 37, cysteine 19–cysteine 50, and cysteine 36–cysteine 41.

The protein belongs to the insulin family. Heterodimer of a B chain and an A chain linked by two disulfide bonds.

The protein resides in the secreted. Its function is as follows. Insulin decreases blood glucose concentration. It increases cell permeability to monosaccharides, amino acids and fatty acids. It accelerates glycolysis, the pentose phosphate cycle, and glycogen synthesis in liver. The sequence is that of Insulin (INS) from Ptyas dhumnades (Big-eyed ratsnake).